A 202-amino-acid polypeptide reads, in one-letter code: Putative 5'(3')-deoxyribonucleotidase (202 aa).

Asp22 serves as the catalytic Nucleophile. Mg(2+)-binding residues include Asp22, Asp24, and Asp156. Residue Asp24 is the Proton donor of the active site.

It belongs to the 5'(3')-deoxyribonucleotidase family. Mg(2+) serves as cofactor.

Functionally, dephosphorylates the 5' and 2'(3')-phosphates of deoxyribonucleotides. The chain is Putative 5'(3')-deoxyribonucleotidase from Chlorobaculum tepidum (strain ATCC 49652 / DSM 12025 / NBRC 103806 / TLS) (Chlorobium tepidum).